Consider the following 264-residue polypeptide: S-adenosylmethionine decarboxylase proenzyme (264 aa).

The Schiff-base intermediate with substrate; via pyruvic acid role is filled by S113. S113 carries the pyruvic acid (Ser); by autocatalysis modification. H118 (proton acceptor; for processing activity) is an active-site residue. C141 serves as the catalytic Proton donor; for catalytic activity.

The protein belongs to the prokaryotic AdoMetDC family. Type 2 subfamily. In terms of assembly, heterooctamer of four alpha and four beta chains arranged as a tetramer of alpha/beta heterodimers. Pyruvate serves as cofactor. Is synthesized initially as an inactive proenzyme. Formation of the active enzyme involves a self-maturation process in which the active site pyruvoyl group is generated from an internal serine residue via an autocatalytic post-translational modification. Two non-identical subunits are generated from the proenzyme in this reaction, and the pyruvate is formed at the N-terminus of the alpha chain, which is derived from the carboxyl end of the proenzyme. The post-translation cleavage follows an unusual pathway, termed non-hydrolytic serinolysis, in which the side chain hydroxyl group of the serine supplies its oxygen atom to form the C-terminus of the beta chain, while the remainder of the serine residue undergoes an oxidative deamination to produce ammonia and the pyruvoyl group blocking the N-terminus of the alpha chain.

The enzyme catalyses S-adenosyl-L-methionine + H(+) = S-adenosyl 3-(methylsulfanyl)propylamine + CO2. It functions in the pathway amine and polyamine biosynthesis; S-adenosylmethioninamine biosynthesis; S-adenosylmethioninamine from S-adenosyl-L-methionine: step 1/1. Catalyzes the decarboxylation of S-adenosylmethionine to S-adenosylmethioninamine (dcAdoMet), the propylamine donor required for the synthesis of the polyamines spermine and spermidine from the diamine putrescine. The polypeptide is S-adenosylmethionine decarboxylase proenzyme (Hahella chejuensis (strain KCTC 2396)).